The primary structure comprises 266 residues: Translation initiation factor 2 subunit alpha (266 aa).

Positions 10 to 81 constitute an S1 motif domain; it reads GELVVGKIDE…SAQQIDLSIK (72 aa). Residues 233-266 form a disordered region; sequence AEDALEESADRAAKVVEQHGGSGQFHRERSEDDE. 2 stretches are compositionally biased toward basic and acidic residues: residues 240-249 and 257-266; these read SADRAAKVVE and FHRERSEDDE.

The protein belongs to the eIF-2-alpha family. Heterotrimer composed of an alpha, a beta and a gamma chain.

EIF-2 functions in the early steps of protein synthesis by forming a ternary complex with GTP and initiator tRNA. This is Translation initiation factor 2 subunit alpha from Haloarcula marismortui (strain ATCC 43049 / DSM 3752 / JCM 8966 / VKM B-1809) (Halobacterium marismortui).